We begin with the raw amino-acid sequence, 347 residues long: NADH-ubiquinone oxidoreductase chain 2 (347 aa).

10 helical membrane-spanning segments follow: residues 1–21, 25–45, 59–79, 96–116, 122–142, 148–168, 200–220, 240–260, 274–294, and 325–345; these read MNPL…GIVM, HWLT…PILM, YFLT…INLV, IILT…FWVP, VHLP…MSVL, MINL…GGWG, MALL…LTFM, ITTI…LSGF, NSII…FFYM, and LLSP…MLML.

The protein belongs to the complex I subunit 2 family. As to quaternary structure, core subunit of respiratory chain NADH dehydrogenase (Complex I) which is composed of 45 different subunits. Interacts with TMEM242.

The protein resides in the mitochondrion inner membrane. It carries out the reaction a ubiquinone + NADH + 5 H(+)(in) = a ubiquinol + NAD(+) + 4 H(+)(out). Its function is as follows. Core subunit of the mitochondrial membrane respiratory chain NADH dehydrogenase (Complex I) which catalyzes electron transfer from NADH through the respiratory chain, using ubiquinone as an electron acceptor. Essential for the catalytic activity and assembly of complex I. This chain is NADH-ubiquinone oxidoreductase chain 2, found in Thoopterus nigrescens (Swift fruit bat).